The chain runs to 132 residues: Small ribosomal subunit protein uS8 (132 aa).

This sequence belongs to the universal ribosomal protein uS8 family. In terms of assembly, part of the 30S ribosomal subunit. Contacts proteins S5 and S12.

Functionally, one of the primary rRNA binding proteins, it binds directly to 16S rRNA central domain where it helps coordinate assembly of the platform of the 30S subunit. This is Small ribosomal subunit protein uS8 from Shouchella clausii (strain KSM-K16) (Alkalihalobacillus clausii).